The sequence spans 219 residues: Resolvase (219 aa).

The 145-residue stretch at 15–159 (VARIYLRAST…EDRRERQRQG (145 aa)) folds into the Resolvase/invertase-type recombinase catalytic domain. The active-site O-(5'-phospho-DNA)-serine intermediate is the Ser-23.

The protein belongs to the site-specific recombinase resolvase family.

In terms of biological role, involved in plasmid partition. The chain is Resolvase (parA) from Escherichia coli.